The sequence spans 334 residues: Methionine adenosyltransferase 2 subunit beta (334 aa).

NADP(+) is bound by residues 37 to 40 (TGLL), 60 to 62 (FRR), 71 to 72 (NL), Cys93, Arg97, Tyr159, and Leu185. Residue Thr309 is modified to Phosphothreonine. A required for interaction with MAT2A region spans residues 319–334 (LWPFLIDKRWRQTVFH).

The protein belongs to the dTDP-4-dehydrorhamnose reductase family. MAT2B subfamily. As to quaternary structure, heterotrimer; composed of a catalytic MAT2A homodimer that binds one regulatory MAT2B chain. Heterohexamer; composed of a central, catalytic MAT2A homotetramer flanked on either side by a regulatory MAT2B chain. NADP binding increases the affinity for MAT2A.

It functions in the pathway amino-acid biosynthesis; S-adenosyl-L-methionine biosynthesis; S-adenosyl-L-methionine from L-methionine: step 1/1. Functionally, regulatory subunit of S-adenosylmethionine synthetase 2, an enzyme that catalyzes the formation of S-adenosylmethionine from methionine and ATP. Regulates MAT2A catalytic activity by changing its kinetic properties, increasing its affinity for L-methionine. Can bind NADP (in vitro). The protein is Methionine adenosyltransferase 2 subunit beta (Mat2b) of Mus musculus (Mouse).